The following is a 1212-amino-acid chain: DNA topoisomerase 1 (1212 aa).

The 114-residue stretch at 1–114 (MKLVVVESPA…DVERVTFNAI (114 aa)) folds into the Toprim domain. Mg(2+)-binding residues include Glu7 and Asp80. Positions 130–556 (DNDLINAYLA…AFWHDFKPKT (427 aa)) constitute a Topo IA-type catalytic domain. Positions 164-169 (SAGRVQ) are interaction with DNA. Catalysis depends on Tyr293, which acts as the O-(5'-phospho-DNA)-tyrosine intermediate. Residues 592 to 619 (CPSCHTGRLALKGGRFGAFIACSNYPEC) form a C4-type zinc finger. Disordered stretches follow at residues 687–742 (GKGN…GVST), 758–937 (ALAG…KARA), and 1107–1212 (RAKM…EVAE). Polar residues-rich tracts occupy residues 708–742 (ASST…GVST) and 770–782 (VSDN…SSTI). Basic and acidic residues predominate over residues 815–840 (ADNRLLSHRNGDIDSRAIPADHKDSS). 2 stretches are compositionally biased toward polar residues: residues 881–890 (AITSDNSPSD) and 897–906 (STPSSATSSV). Basic and acidic residues predominate over residues 921–934 (KADEQAKEEEESRK). Residues 1109–1140 (KMPKKKKTKKAAAKKPAAKKTTTKKAAPKKAT) are compositionally biased toward basic residues. A compositionally biased stretch (low complexity) spans 1141–1151 (TKTATPKSATT). A compositionally biased stretch (basic residues) spans 1167 to 1182 (PAKKAVAKKTTAKKPA). Over residues 1183-1199 (SKSATKKAPSSKTTAAK) the composition is skewed to low complexity.

It belongs to the type IA topoisomerase family. Monomer. It depends on Mg(2+) as a cofactor.

It carries out the reaction ATP-independent breakage of single-stranded DNA, followed by passage and rejoining.. Releases the supercoiling and torsional tension of DNA, which is introduced during the DNA replication and transcription, by transiently cleaving and rejoining one strand of the DNA duplex. Introduces a single-strand break via transesterification at a target site in duplex DNA. The scissile phosphodiester is attacked by the catalytic tyrosine of the enzyme, resulting in the formation of a DNA-(5'-phosphotyrosyl)-enzyme intermediate and the expulsion of a 3'-OH DNA strand. The free DNA strand then undergoes passage around the unbroken strand, thus removing DNA supercoils. Finally, in the religation step, the DNA 3'-OH attacks the covalent intermediate to expel the active-site tyrosine and restore the DNA phosphodiester backbone. This is DNA topoisomerase 1 from Zymomonas mobilis subsp. mobilis (strain ATCC 31821 / ZM4 / CP4).